A 482-amino-acid polypeptide reads, in one-letter code: Lipoamide acyltransferase component of branched-chain alpha-keto acid dehydrogenase complex, mitochondrial (482 aa).

Residues 1–61 constitute a mitochondrion transit peptide; the sequence is MAAALVLRTW…QWLKTTAALQ (61 aa). The 76-residue stretch at 64 to 139 folds into the Lipoyl-binding domain; the sequence is IVQFKLSDIG…YVGKPLVDIE (76 aa). Lys105 carries the N6-lipoyllysine modification. At Lys133 the chain carries N6-succinyllysine. A critical for association with PPM1K region spans residues 145–160; the sequence is DSEEDVVETPAVSHDE. The tract at residues 146–171 is disordered; the sequence is SEEDVVETPAVSHDEHTHQEIKGQKT. Over residues 157-168 the composition is skewed to basic and acidic residues; the sequence is SHDEHTHQEIKG. Positions 172-209 constitute a Peripheral subunit-binding (PSBD) domain; the sequence is LATPAVRRLAMENNIKLSEVIGSGKDGRILKEDILNYL. Lys196 carries the post-translational modification N6-acetyllysine; alternate. Position 196 is an N6-succinyllysine; alternate (Lys196). Position 202 is an N6-acetyllysine (Lys202). The segment covering 218 to 230 has biased composition (pro residues); the sequence is PPSPKAEIMPPPP. The tract at residues 218–238 is disordered; sequence PPSPKAEIMPPPPKPKDRTIP. At Ser220 the chain carries Phosphoserine. An N6-acetyllysine mark is found at Lys243 and Lys250. Residue Lys261 is modified to N6-succinyllysine. The residue at position 289 (Lys289) is an N6-acetyllysine; alternate. Residue Lys289 is modified to N6-succinyllysine; alternate. Arg291 serves as a coordination point for CoA. N6-acetyllysine is present on residues Lys295 and Lys304. CoA is bound by residues Ser306, Asp349, Gln378, Ser399, Asn400, Ser403, Gly424, and Ile426. Lys435 is modified (N6-acetyllysine). N6-acetyllysine; alternate is present on Lys440. Residue Lys440 is modified to N6-succinyllysine; alternate. Residues His452 and Asp456 contribute to the active site.

Belongs to the 2-oxoacid dehydrogenase family. In terms of assembly, forms a 24-polypeptide structural core with octahedral symmetry that represents the E2 component of the branched-chain alpha-ketoacid dehydrogenase (BCKDH) complex. The BCKDH complex is composed of three major building blocks E1, E2 and E3. It is organized around E2, a 24-meric cubic core composed of DBT, to which are associated 6 to 12 copies of E1, and approximately 6 copies of the dehydrogenase E3, a DLD dimer. Interacts with PPM1K with a 24:1 stoichiometry; the N-terminal region (residues 49-61) of PPM1K and C-terminal linker of the lipoyl domain of DBT/E2 (residues 145-160) are critical for this interaction whereas the lipoyl prosthetic group is dispensable. This interaction requires colocalization in mitochondria. PPM1K competes with BCKDK for binding to DBT; this interaction is modulated by branched-chain alpha-keto acids (BCKAs). At steady state, BCKDH holoenzyme preferentially binds BCKDK and BCKDHA is phosphorylated. In response to high levels of BCKAs, BCKDK is replaced by PPM1K leading to BCKDHA dephosphorylation. Requires (R)-lipoate as cofactor. In terms of tissue distribution, expressed in kidney (at protein level).

The protein resides in the mitochondrion matrix. The enzyme catalyses N(6)-[(R)-dihydrolipoyl]-L-lysyl-[protein] + 2-methylpropanoyl-CoA = N(6)-[(R)-S(8)-2-methylpropanoyldihydrolipoyl]-L-lysyl-[protein] + CoA. In terms of biological role, the branched-chain alpha-keto dehydrogenase complex catalyzes the overall conversion of alpha-keto acids to acyl-CoA and CO(2). It contains multiple copies of three enzymatic components: branched-chain alpha-keto acid decarboxylase (E1), lipoamide acyltransferase (E2) and lipoamide dehydrogenase (E3). Within this complex, the catalytic function of this enzyme is to accept, and to transfer to coenzyme A, acyl groups that are generated by the branched-chain alpha-keto acid decarboxylase component. This is Lipoamide acyltransferase component of branched-chain alpha-keto acid dehydrogenase complex, mitochondrial (DBT) from Bos taurus (Bovine).